The chain runs to 172 residues: Adenine phosphoribosyltransferase (172 aa).

Belongs to the purine/pyrimidine phosphoribosyltransferase family. Homodimer.

The protein resides in the cytoplasm. It catalyses the reaction AMP + diphosphate = 5-phospho-alpha-D-ribose 1-diphosphate + adenine. It functions in the pathway purine metabolism; AMP biosynthesis via salvage pathway; AMP from adenine: step 1/1. Its function is as follows. Catalyzes a salvage reaction resulting in the formation of AMP, that is energically less costly than de novo synthesis. This is Adenine phosphoribosyltransferase from Rippkaea orientalis (strain PCC 8801 / RF-1) (Cyanothece sp. (strain PCC 8801)).